A 165-amino-acid polypeptide reads, in one-letter code: Dihydrofolate reductase (165 aa).

One can recognise a DHFR domain in the interval 3 to 165 (VVGLIWAQST…RYRLHSYHRS (163 aa)). 7–9 (IWA) contacts substrate. Residues 8 to 9 (WA) and 16 to 21 (IGRDGG) contribute to the NADP(+) site. A substrate-binding site is contributed by Asp29. Residue 45 to 48 (GRRT) coordinates NADP(+). Arg62 contacts substrate. NADP(+) is bound by residues 67–70 (LSRQ) and 100–105 (IGGEQI). Residue Thr119 coordinates substrate.

Belongs to the dihydrofolate reductase family.

It catalyses the reaction (6S)-5,6,7,8-tetrahydrofolate + NADP(+) = 7,8-dihydrofolate + NADPH + H(+). Its pathway is cofactor biosynthesis; tetrahydrofolate biosynthesis; 5,6,7,8-tetrahydrofolate from 7,8-dihydrofolate: step 1/1. Functionally, key enzyme in folate metabolism. Catalyzes an essential reaction for de novo glycine and purine synthesis, and for DNA precursor synthesis. The sequence is that of Dihydrofolate reductase (folA) from Mycobacterium leprae (strain TN).